Consider the following 397-residue polypeptide: 3-ketoacyl-CoA thiolase, mitochondrial (397 aa).

Residues 1–16 (MALLRGVFIVAAKRTP) constitute a mitochondrion; not cleaved transit peptide. N6-acetyllysine; alternate is present on lysine 25. The residue at position 25 (lysine 25) is an N6-succinyllysine; alternate. Residue lysine 45 is modified to N6-succinyllysine. The active-site Acyl-thioester intermediate is cysteine 92. Threonine 119 carries the phosphothreonine modification. Position 121 is a phosphoserine (serine 121). Position 127 is a phosphotyrosine (tyrosine 127). Threonine 136 carries the phosphothreonine modification. Lysine 137, lysine 143, lysine 158, lysine 171, lysine 191, and lysine 209 each carry N6-acetyllysine; alternate. N6-succinyllysine; alternate is present on residues lysine 137, lysine 143, lysine 158, lysine 171, lysine 191, and lysine 209. Lysine 211, lysine 212, and lysine 214 each carry N6-succinyllysine. Arginine 224 and threonine 227 together coordinate CoA. Lysine 240 bears the N6-succinyllysine mark. At lysine 241 the chain carries N6-acetyllysine. Serine 251 is a CoA binding site. An N6-acetyllysine mark is found at lysine 269 and lysine 270. Lysine 305 bears the N6-acetyllysine; alternate mark. Lysine 305 is subject to N6-succinyllysine; alternate. Residue serine 310 is modified to Phosphoserine. Lysine 312 carries the N6-acetyllysine; alternate modification. At lysine 312 the chain carries N6-succinyllysine; alternate. A Phosphoserine modification is found at serine 333. Lysine 340 bears the N6-acetyllysine mark. Residue serine 344 is modified to Phosphoserine. Lysine 375 bears the N6-acetyllysine mark. Cysteine 382 (proton donor/acceptor) is an active-site residue.

Belongs to the thiolase-like superfamily. Thiolase family. Homotetramer. Interacts with BNIP3. Expressed in liver, brown adipose tissue and heart (at protein level).

It localises to the mitochondrion. The catalysed reaction is an acyl-CoA + acetyl-CoA = a 3-oxoacyl-CoA + CoA. It catalyses the reaction 2 acetyl-CoA = acetoacetyl-CoA + CoA. It carries out the reaction acetyl-CoA + H2O = acetate + CoA + H(+). The enzyme catalyses propanoyl-CoA + H2O = propanoate + CoA + H(+). The catalysed reaction is butanoyl-CoA + H2O = butanoate + CoA + H(+). It catalyses the reaction hexanoyl-CoA + H2O = hexanoate + CoA + H(+). It carries out the reaction octanoyl-CoA + H2O = octanoate + CoA + H(+). The enzyme catalyses decanoyl-CoA + H2O = decanoate + CoA + H(+). The catalysed reaction is dodecanoyl-CoA + H2O = dodecanoate + CoA + H(+). It catalyses the reaction tetradecanoyl-CoA + H2O = tetradecanoate + CoA + H(+). It carries out the reaction hexadecanoyl-CoA + H2O = hexadecanoate + CoA + H(+). Its pathway is lipid metabolism; fatty acid beta-oxidation. With respect to regulation, the 3-oxoacetyl-CoA thiolase activity is inhibited by acetyl-CoA while the acetyl-CoA hydrolase activity is inhibited by acetoacetyl-CoA. In terms of biological role, in the production of energy from fats, this is one of the enzymes that catalyzes the last step of the mitochondrial beta-oxidation pathway, an aerobic process breaking down fatty acids into acetyl-CoA. Using free coenzyme A/CoA, catalyzes the thiolytic cleavage of medium- to long-chain unbranched 3-oxoacyl-CoAs into acetyl-CoA and a fatty acyl-CoA shortened by two carbon atoms. Also catalyzes the condensation of two acetyl-CoA molecules into acetoacetyl-CoA and could be involved in the production of ketone bodies. Also displays hydrolase activity on various fatty acyl-CoAs. Thereby, could be responsible for the production of acetate in a side reaction to beta-oxidation. Abolishes BNIP3-mediated apoptosis and mitochondrial damage. This is 3-ketoacyl-CoA thiolase, mitochondrial (Acaa2) from Rattus norvegicus (Rat).